Here is a 534-residue protein sequence, read N- to C-terminus: GTPase Obg (534 aa).

Positions 2 to 159 (ASFVDRVVLH…SDIVLELKSI (158 aa)) constitute an Obg domain. The tract at residues 63-82 (APHRHASNGGQGMGDWRGGK) is disordered. Positions 71–82 (GGQGMGDWRGGK) are enriched in gly residues. The OBG-type G domain occupies 160 to 343 (ADIALVGFPS…LSFAMAELVT (184 aa)). GTP is bound by residues 166 to 173 (GFPSAGKS), 191 to 195 (FTTLI), 212 to 215 (DVPG), 295 to 298 (NKID), and 324 to 326 (SAS). The Mg(2+) site is built by serine 173 and threonine 193. The region spanning 363–449 (PRAVNRKEFT…ENAVVFDWEP (87 aa)) is the OCT domain. Residues 456–534 (ELLSGPRGTD…AASTDDGDAL (79 aa)) are disordered. Composition is skewed to basic and acidic residues over residues 464-504 (TDPR…ERKA) and 512-526 (SARRDREAHESREAA).

This sequence belongs to the TRAFAC class OBG-HflX-like GTPase superfamily. OBG GTPase family. Monomer. The cofactor is Mg(2+).

The protein resides in the cytoplasm. Its function is as follows. An essential GTPase which binds GTP, GDP and possibly (p)ppGpp with moderate affinity, with high nucleotide exchange rates and a fairly low GTP hydrolysis rate. Plays a role in control of the cell cycle, stress response, ribosome biogenesis and in those bacteria that undergo differentiation, in morphogenesis control. The protein is GTPase Obg of Renibacterium salmoninarum (strain ATCC 33209 / DSM 20767 / JCM 11484 / NBRC 15589 / NCIMB 2235).